An 888-amino-acid polypeptide reads, in one-letter code: Transmembrane channel-like protein 2 (888 aa).

The segment at 1 to 128 (MSPQLKSLDE…SLGSSVSTGD (128 aa)) is disordered. Over 1 to 228 (MSPQLKSLDE…KIKDIESHFG (228 aa)) the chain is Cytoplasmic. Basic and acidic residues-rich tracts occupy residues 7-16 (SLDEEGDKSA), 32-44 (DGHR…KDPA), and 87-110 (RTSL…EAGK). Polar residues predominate over residues 117–128 (STSLGSSVSTGD). Residues 229–266 (SSVASYFIFLRWMYGVNLVLFGLIFGLVIIPEVLMGMP) form a helical membrane-spanning segment. The Extracellular segment spans residues 267–317 (YGSIPRKTVPRAEEERAMDFSVLWDFEGYIKYSALFYGYYNNQRTIGWLRY). A helical membrane pass occupies residues 318–350 (RLPMAYFMVGVSVFGYSLMIVIRSMASNTQGST). The Cytoplasmic segment spans residues 351 to 406 (SEGDSDSFTFSFKMFTSWDYLIGNSETADNKYVSITTSFKESIVDEQESNKEGNIH). A helical transmembrane segment spans residues 407–437 (LTRFLRVLANFLILCCLCGSGYLIYFVVKRS). Over 438–447 (QEFSKMQNVS) the chain is Extracellular. The helical transmembrane segment at 448-475 (WYERNEVEIVMSLLGMFCPPLFETIAAL) threads the bilayer. The Cytoplasmic segment spans residues 476–479 (ENYH). A helical membrane pass occupies residues 480–514 (PRTGLKWQLGRIFALFLGNLYTFLLALMDDVHLKL). Topologically, residues 515 to 556 (SNEEKIKNITHWTLFNYYNSSGGNESVPRPPPHPADVPRGSC) are extracellular. Residues 557-594 (WETAVGIEFMRLTVSDMLVTYLTILVGDFLRACFVRFM) traverse the membrane as a helical segment. Residues 595-613 (NHCWCWDLEAGFPSYAEFD) lie on the Cytoplasmic side of the membrane. The helical transmembrane segment at 614–634 (ISGNVLGLIFNQGMIWMGSFY) threads the bilayer. Topologically, residues 635 to 637 (APG) are extracellular. Residues 638-660 (LVGINVLRLLTSMYFQCWAVMSS) form a helical membrane-spanning segment. Over 661-674 (NVPHERVFKASRSN) the chain is Cytoplasmic. A helical transmembrane segment spans residues 675–698 (NFYMGLLLLVLFLSLLPVAYTVMS). At 699 to 741 (LPPSFDCGPFSGKNRMYDVLHETIENDFPKFLGKIFAFLANPG) the chain is on the extracellular side. The chain crosses the membrane as a helical span at residues 742-775 (LIIPAILLMFLAIYYLNSVSKSLSRANAQLRKKI). Residues 776–888 (QALREVEKNH…SGKRTQRPHN (113 aa)) are Cytoplasmic-facing. Positions 813–888 (LTKEEPTSHS…SGKRTQRPHN (76 aa)) are disordered. 2 stretches are compositionally biased toward polar residues: residues 836–851 (PHTS…STSW) and 866–881 (GQPQ…PSGK).

This sequence belongs to the TMC family. As to quaternary structure, forms the MET channel composed of TMC dimer (TMC1 or TMC2), TMIE, TOMT, CIB (CIB2 or CIB3), LHFPL5 and PDH15. The interaction of TMC1 and TMC2 with TOMT is required for the transportation of TMC1/2 into the stereocilia of hair cells. Interacts (via N-terminus) with both isoforms CD1 and CD3 of PCDH15. Can form a heterodimer with TMC1, TMC5 or TMC7. As to expression, inner ear and testis. Expressed in cochlear inner and outer hair cells and vestibular organ hair cells.

Its subcellular location is the cell membrane. It carries out the reaction Ca(2+)(in) = Ca(2+)(out). Pore-forming subunit of the mechanotransducer (MET) non-selective cation channel complex located at the tips of stereocilia of cochlear hair cells and that mediates sensory transduction in the auditory system. The MET complex is composed of two dimeric pore-forming ion-conducting transmembrane TMC (TMC1 or TMC2) subunits, several auxiliary proteins including LHFPL5, TMIE, CIB2/3 and TOMT, the tip-link PCDH15, and possibly the PIEZO subunits. MET channel is activated by tension in the tip-link extending from the side wall of one stereocilium to the tip of the adjacent shorter stereocilium, where the channel is located. TMC2 MET channel is highly permeable to calcium and likely transports monovalent cations. Also involved in vestibular hair cell transduction current of the mammalian inner ear. In Mus musculus (Mouse), this protein is Transmembrane channel-like protein 2.